A 484-amino-acid polypeptide reads, in one-letter code: tRNA sulfurtransferase (484 aa).

The THUMP domain occupies 61-165 (ILLVELLGRI…NDKMMLIKAR (105 aa)). ATP is bound by residues 183–184 (LI), lysine 265, glycine 287, and glutamine 296. An intrachain disulfide couples cysteine 344 to cysteine 456. Residues 404 to 484 (LSANDVILDI…DNVKVLNKIS (81 aa)) enclose the Rhodanese domain. The Cysteine persulfide intermediate role is filled by cysteine 456.

This sequence belongs to the ThiI family.

Its subcellular location is the cytoplasm. It catalyses the reaction [ThiI sulfur-carrier protein]-S-sulfanyl-L-cysteine + a uridine in tRNA + 2 reduced [2Fe-2S]-[ferredoxin] + ATP + H(+) = [ThiI sulfur-carrier protein]-L-cysteine + a 4-thiouridine in tRNA + 2 oxidized [2Fe-2S]-[ferredoxin] + AMP + diphosphate. The enzyme catalyses [ThiS sulfur-carrier protein]-C-terminal Gly-Gly-AMP + S-sulfanyl-L-cysteinyl-[cysteine desulfurase] + AH2 = [ThiS sulfur-carrier protein]-C-terminal-Gly-aminoethanethioate + L-cysteinyl-[cysteine desulfurase] + A + AMP + 2 H(+). It participates in cofactor biosynthesis; thiamine diphosphate biosynthesis. Functionally, catalyzes the ATP-dependent transfer of a sulfur to tRNA to produce 4-thiouridine in position 8 of tRNAs, which functions as a near-UV photosensor. Also catalyzes the transfer of sulfur to the sulfur carrier protein ThiS, forming ThiS-thiocarboxylate. This is a step in the synthesis of thiazole, in the thiamine biosynthesis pathway. The sulfur is donated as persulfide by IscS. The polypeptide is tRNA sulfurtransferase (Histophilus somni (strain 129Pt) (Haemophilus somnus)).